We begin with the raw amino-acid sequence, 363 residues long: Probable transglycosylase BTH_I0986 (363 aa).

It belongs to the glycosyltransferase group 1 family. Glycosyltransferase 4 subfamily.

Probably a transglycosylase. Probably involved in synthesis of the outer membrane receptor for a cellular contact-dependent growth inhibition (CDI) system. The sequence is that of Probable transglycosylase BTH_I0986 from Burkholderia thailandensis (strain ATCC 700388 / DSM 13276 / CCUG 48851 / CIP 106301 / E264).